The following is a 159-amino-acid chain: Urease accessory protein UreE (159 aa).

The protein belongs to the UreE family.

The protein resides in the cytoplasm. Functionally, involved in urease metallocenter assembly. Binds nickel. Probably functions as a nickel donor during metallocenter assembly. This is Urease accessory protein UreE from Pseudomonas entomophila (strain L48).